Consider the following 255-residue polypeptide: Large ribosomal subunit protein eL8 (255 aa).

Over residues 1 to 16 (MPKAPKKITKPKKAEK) the composition is skewed to basic residues. The disordered stretch occupies residues 1–28 (MPKAPKKITKPKKAEKKKNPLFQAKPRS).

The protein belongs to the eukaryotic ribosomal protein eL8 family.

The chain is Large ribosomal subunit protein eL8 (RPL7A) from Tetrahymena thermophila.